Here is a 257-residue protein sequence, read N- to C-terminus: Glutamate racemase (257 aa).

Residues 12–13 (DS) and 44–45 (YG) each bind substrate. Cysteine 75 functions as the Proton donor/acceptor in the catalytic mechanism. 76-77 (NT) lines the substrate pocket. The active-site Proton donor/acceptor is the cysteine 176. 177 to 178 (TH) serves as a coordination point for substrate.

Belongs to the aspartate/glutamate racemases family.

The catalysed reaction is L-glutamate = D-glutamate. It functions in the pathway cell wall biogenesis; peptidoglycan biosynthesis. Its function is as follows. Provides the (R)-glutamate required for cell wall biosynthesis. The chain is Glutamate racemase from Thermus thermophilus (strain ATCC BAA-163 / DSM 7039 / HB27).